The primary structure comprises 204 residues: N-(5'-phosphoribosyl)anthranilate isomerase (204 aa).

This sequence belongs to the TrpF family.

It carries out the reaction N-(5-phospho-beta-D-ribosyl)anthranilate = 1-(2-carboxyphenylamino)-1-deoxy-D-ribulose 5-phosphate. Its pathway is amino-acid biosynthesis; L-tryptophan biosynthesis; L-tryptophan from chorismate: step 3/5. In Desulforudis audaxviator (strain MP104C), this protein is N-(5'-phosphoribosyl)anthranilate isomerase.